The following is a 170-amino-acid chain: Putative 5'(3')-deoxyribonucleotidase (170 aa).

Asp-28 acts as the Nucleophile in catalysis. The Mg(2+) site is built by Asp-28, Asp-30, and Asp-134. Catalysis depends on Asp-30, which acts as the Proton donor.

Belongs to the 5'(3')-deoxyribonucleotidase family. The cofactor is Mg(2+).

Dephosphorylates the 5' and 2'(3')-phosphates of deoxyribonucleotides. In Vibrio parahaemolyticus (KVP40), this protein is Putative 5'(3')-deoxyribonucleotidase.